The following is a 691-amino-acid chain: Serotransferrin-2 (691 aa).

An N-terminal signal peptide occupies residues 1–18; the sequence is MKLLLLSALLGCLATAYA. 2 Transferrin-like domains span residues 25-329 and 340-670; these read VKWC…SLKK and IKWC…SLRK. A disulfide bridge connects residues Cys28 and Cys50. Fe(3+) contacts are provided by Asp74 and Tyr104. Cystine bridges form between Cys127–Cys207, Cys172–Cys186, and Cys235–Cys249. Positions 129, 134, 136, and 137 each coordinate hydrogencarbonate. Asn169 is a glycosylation site (N-linked (GlcNAc...) asparagine). Tyr201 contributes to the Fe(3+) binding site. His257 is a binding site for Fe(3+). 2 disulfides stabilise this stretch: Cys343/Cys379 and Cys353/Cys370. Fe(3+) contacts are provided by Asp394 and Tyr428. Cystine bridges form between Cys404–Cys682, Cys419–Cys643, Cys451–Cys530, Cys475–Cys671, Cys485–Cys499, Cys496–Cys513, and Cys570–Cys584. Hydrogencarbonate is bound by residues Thr453, Arg457, Ala459, and Gly460. Tyr524 serves as a coordination point for Fe(3+). His592 is a Fe(3+) binding site.

Belongs to the transferrin family. In terms of assembly, monomer. Abundant in liver and serum with smaller amounts found in the stomach and kidney.

The protein localises to the secreted. Its function is as follows. Transferrins are iron binding transport proteins which can bind two Fe(3+) ions in association with the binding of an anion, usually bicarbonate. It is responsible for the transport of iron from sites of absorption and heme degradation to those of storage and utilization. Serum transferrin may also have a further role in stimulating cell proliferation. This chain is Serotransferrin-2 (tf2), found in Salmo salar (Atlantic salmon).